Here is a 233-residue protein sequence, read N- to C-terminus: Probable 2-phosphosulfolactate phosphatase (233 aa).

The protein belongs to the ComB family. The cofactor is Mg(2+).

It catalyses the reaction (2R)-O-phospho-3-sulfolactate + H2O = (2R)-3-sulfolactate + phosphate. The sequence is that of Probable 2-phosphosulfolactate phosphatase from Clostridium tetani (strain Massachusetts / E88).